The primary structure comprises 288 residues: DegV domain-containing protein SAS0714 (288 aa).

A DegV domain is found at 3-282; the sequence is IAVMTDSTSY…SGGLGLGYVG (280 aa). Hexadecanoate is bound by residues threonine 62 and serine 95.

May bind long-chain fatty acids, such as palmitate, and may play a role in lipid transport or fatty acid metabolism. The sequence is that of DegV domain-containing protein SAS0714 from Staphylococcus aureus (strain MSSA476).